The chain runs to 231 residues: 7-cyano-7-deazaguanine synthase (231 aa).

L8–A18 provides a ligand contact to ATP. C189, C197, C200, and C203 together coordinate Zn(2+).

The protein belongs to the QueC family. The cofactor is Zn(2+).

It carries out the reaction 7-carboxy-7-deazaguanine + NH4(+) + ATP = 7-cyano-7-deazaguanine + ADP + phosphate + H2O + H(+). It participates in purine metabolism; 7-cyano-7-deazaguanine biosynthesis. Functionally, catalyzes the ATP-dependent conversion of 7-carboxy-7-deazaguanine (CDG) to 7-cyano-7-deazaguanine (preQ(0)). In Synechococcus elongatus (strain ATCC 33912 / PCC 7942 / FACHB-805) (Anacystis nidulans R2), this protein is 7-cyano-7-deazaguanine synthase.